A 310-amino-acid chain; its full sequence is tRNA dimethylallyltransferase (310 aa).

13–20 serves as a coordination point for ATP; that stretch reads GPTASGKT. 15-20 is a substrate binding site; that stretch reads TASGKT. 4 interaction with substrate tRNA regions span residues 38–41, 162–166, 243–248, and 276–283; these read DSAL, QRLSR, RCVGYR, and KRQITWLR.

The protein belongs to the IPP transferase family. As to quaternary structure, monomer. Mg(2+) serves as cofactor.

The enzyme catalyses adenosine(37) in tRNA + dimethylallyl diphosphate = N(6)-dimethylallyladenosine(37) in tRNA + diphosphate. Functionally, catalyzes the transfer of a dimethylallyl group onto the adenine at position 37 in tRNAs that read codons beginning with uridine, leading to the formation of N6-(dimethylallyl)adenosine (i(6)A). In Vibrio campbellii (strain ATCC BAA-1116), this protein is tRNA dimethylallyltransferase.